An 81-amino-acid chain; its full sequence is Cytochrome c oxidase subunit 7A1, mitochondrial (81 aa).

The N-terminal 21 residues, 1 to 21, are a transit peptide targeting the mitochondrion; it reads MRHLLGLPQLASRAFSTTVRQ. The helical transmembrane segment at 51 to 72 threads the bilayer; the sequence is ILYRLTMTLTVVGTGYSLYWLL.

It belongs to the cytochrome c oxidase VIIa family. As to quaternary structure, component of the complex IV (CIV, cytochrome c oxidase). The complex exists as a monomer or a dimer and forms supercomplexes (SCs) in the inner mitochondrial membrane with NADH-ubiquinone oxidoreductase (complex I, CI) and ubiquinol-cytochrome c oxidoreductase (cytochrome b-c1 complex, complex III, CIII), resulting in different assemblies (supercomplex SCI(1)III(2)IV(1) and megacomplex MCI(2)III(2)IV(2)).

It localises to the mitochondrion inner membrane. Its pathway is energy metabolism; oxidative phosphorylation. Component of the mitochondrial respiratory complex IV (CIV, also named cytochrome c oxidase complex), the last enzyme in the mitochondrial electron transport chain which drives oxidative phosphorylation. The CIV complex is the component of the respiratory chain that catalyzes the reduction of oxygen to water. Acts as an assembly factor that specifically drives the homodimerization of CIV complexes, mediating the formation of mitochondrial respiratory supercomplexes (respirasomes) containing two CIV: supercomplxes with two molecules of CIV show improved activity. This Danio rerio (Zebrafish) protein is Cytochrome c oxidase subunit 7A1, mitochondrial.